Consider the following 258-residue polypeptide: Ditrans,polycis-undecaprenyl-diphosphate synthase ((2E,6E)-farnesyl-diphosphate specific) (258 aa).

Aspartate 24 is a catalytic residue. A Mg(2+)-binding site is contributed by aspartate 24. Substrate-binding positions include glycine 25–arginine 28, tryptophan 29, arginine 37, histidine 41, and serine 69–glutamate 71. The active-site Proton acceptor is the asparagine 72. Substrate-binding positions include tryptophan 73, arginine 75, arginine 192, and arginine 198–serine 200. Glutamate 211 serves as a coordination point for Mg(2+).

Belongs to the UPP synthase family. Homodimer. Mg(2+) is required as a cofactor.

It carries out the reaction 8 isopentenyl diphosphate + (2E,6E)-farnesyl diphosphate = di-trans,octa-cis-undecaprenyl diphosphate + 8 diphosphate. Functionally, catalyzes the sequential condensation of isopentenyl diphosphate (IPP) with (2E,6E)-farnesyl diphosphate (E,E-FPP) to yield (2Z,6Z,10Z,14Z,18Z,22Z,26Z,30Z,34E,38E)-undecaprenyl diphosphate (di-trans,octa-cis-UPP). UPP is the precursor of glycosyl carrier lipid in the biosynthesis of bacterial cell wall polysaccharide components such as peptidoglycan and lipopolysaccharide. This chain is Ditrans,polycis-undecaprenyl-diphosphate synthase ((2E,6E)-farnesyl-diphosphate specific), found in Xanthomonas campestris pv. campestris (strain ATCC 33913 / DSM 3586 / NCPPB 528 / LMG 568 / P 25).